A 243-amino-acid chain; its full sequence is Proteasome subunit beta (243 aa).

A propeptide spans 1–49 (removed in mature form; by autocatalysis); that stretch reads MRTPTGDLSDGPAEELGRDQPVFGPEIGEFEHSERRAAQADGEGEMKTG. Residues 1–50 form a disordered region; sequence MRTPTGDLSDGPAEELGRDQPVFGPEIGEFEHSERRAAQADGEGEMKTGT. Residues 29 to 38 are compositionally biased toward basic and acidic residues; it reads EFEHSERRAA. Thr50 (nucleophile) is an active-site residue.

Belongs to the peptidase T1B family. In terms of assembly, the 20S proteasome core is composed of 14 alpha and 14 beta subunits that assemble into four stacked heptameric rings, resulting in a barrel-shaped structure. The two inner rings, each composed of seven catalytic beta subunits, are sandwiched by two outer rings, each composed of seven alpha subunits. The catalytic chamber with the active sites is on the inside of the barrel. Has a gated structure, the ends of the cylinder being occluded by the N-termini of the alpha-subunits. Is capped at one or both ends by the proteasome regulatory ATPase, PAN.

It localises to the cytoplasm. It carries out the reaction Cleavage of peptide bonds with very broad specificity.. With respect to regulation, the formation of the proteasomal ATPase PAN-20S proteasome complex, via the docking of the C-termini of PAN into the intersubunit pockets in the alpha-rings, triggers opening of the gate for substrate entry. Interconversion between the open-gate and close-gate conformations leads to a dynamic regulation of the 20S proteasome proteolysis activity. Functionally, component of the proteasome core, a large protease complex with broad specificity involved in protein degradation. This is Proteasome subunit beta from Halorubrum lacusprofundi (strain ATCC 49239 / DSM 5036 / JCM 8891 / ACAM 34).